A 154-amino-acid chain; its full sequence is Insulin-like peptide 1 (154 aa).

Residues 1-29 (MFSQHNGAAVHGLRLQSLLIAAMLTAAMA) form the signal peptide. 3 disulfide bridges follow: Cys49-Cys138, Cys61-Cys151, and Cys137-Cys142. The interval 72–92 (RESLLGNSDDDEDTEQEVQDD) is disordered. Residues 73-122 (ESLLGNSDDDEDTEQEVQDDSSMWQTLDGAGYSFSPLLTNLYGSEVLIKM) constitute a propeptide, connecting peptide. Acidic residues predominate over residues 79 to 91 (SDDDEDTEQEVQD).

Belongs to the insulin family. As to quaternary structure, heterodimer of a B chain and an A chain linked by two disulfide bonds.

It localises to the secreted. Its function is as follows. Possible ligand of InR/insulin-like receptor. This is Insulin-like peptide 1 from Drosophila melanogaster (Fruit fly).